The chain runs to 248 residues: Myelin protein P0 (248 aa).

The N-terminal stretch at 1 to 29 (MAPGAPSSSPSPILAVLLFSSLVLSPAQA) is a signal peptide. Residues 30 to 143 (IVVYTDREVH…DIVGKTSQVT (114 aa)) enclose the Ig-like V-type domain. The Extracellular segment spans residues 30–153 (IVVYTDREVH…LYVFEKVPTR (124 aa)). Cysteine 50 and cysteine 127 are disulfide-bonded. Asparagine 122 carries N-linked (GlcNAc...) (complex) asparagine glycosylation. The chain crosses the membrane as a helical span at residues 154-179 (YGVVLGAVIGGVLGVVLLLLLLFYVV). Over 180 to 248 (RYCWLRRQAA…GLGESRKDKK (69 aa)) the chain is Cytoplasmic. Serine 210 bears the Phosphoserine; by PKC mark. The tract at residues 224–248 (DHSRSTKAVSEKKAKGLGESRKDKK) is disordered. Phosphoserine is present on residues serine 226 and serine 228. Residues serine 233 and serine 243 each carry the phosphoserine; by PKC modification.

This sequence belongs to the myelin P0 protein family. In terms of assembly, homodimer and homotetramer. In terms of processing, N-glycosylated; contains sulfate-substituted glycan. Found only in peripheral nervous system Schwann cells.

It is found in the cell membrane. The protein localises to the myelin membrane. Functionally, is an adhesion molecule necessary for normal myelination in the peripheral nervous system. It mediates adhesion between adjacent myelin wraps and ultimately drives myelin compaction. The chain is Myelin protein P0 (MPZ) from Homo sapiens (Human).